A 506-amino-acid chain; its full sequence is Serine/threonine-protein kinase D6PKL1 (506 aa).

A disordered region spans residues 1 to 96; sequence MASKYGSGVL…TCSSFSGNNK (96 aa). Residues 12 to 23 show a composition bias toward basic and acidic residues; the sequence is ENKKEKGDKETP. The span at 24–54 shows a compositional bias: polar residues; it reads ETSYSSQSVSVNTLADQVSSTLSFAPSSDSK. Residues 55–67 show a composition bias toward basic and acidic residues; the sequence is TGGEVKFNEKSDQ. Over residues 77 to 92 the composition is skewed to low complexity; it reads STSSDISDESTCSSFS. The Protein kinase domain maps to 123–456; sequence FRLLKRLGCG…ATEMKQHPFF (334 aa). Residues 129 to 137 and lysine 152 contribute to the ATP site; that span reads LGCGDIGTV. Aspartate 248 functions as the Proton acceptor in the catalytic mechanism. Residues 475-495 form a disordered region; the sequence is PVDYESAPATPAAATSTSVKS. The segment covering 480–492 has biased composition (low complexity); sequence SAPATPAAATSTS.

It belongs to the protein kinase superfamily. AGC Ser/Thr protein kinase family.

It is found in the cell membrane. It carries out the reaction L-seryl-[protein] + ATP = O-phospho-L-seryl-[protein] + ADP + H(+). The catalysed reaction is L-threonyl-[protein] + ATP = O-phospho-L-threonyl-[protein] + ADP + H(+). Protein kinase that regulates the auxin transport activity of PIN auxin efflux facilitators by direct phosphorylation. D6PK-mediated PIN phosphorylation promotes auxin transport in the hypocotyl and this is a prerequisite for PHOT1-dependent hypocotyl bending. The polypeptide is Serine/threonine-protein kinase D6PKL1 (D6PKL1) (Arabidopsis thaliana (Mouse-ear cress)).